The sequence spans 633 residues: Histone-lysine N-methyltransferase Su(var)3-9 (633 aa).

The Chromo domain occupies 213–271; the sequence is YIVEKIESVEVVQFQPVFFVKWLGYDVSANTWESYVNLSDCAEMEKFVERHLQLHQHYI. In terms of domain architecture, Pre-SET spans 407–472; sequence VGCMCRHQSG…SCTNRVVQNG (66 aa). Positions 409, 411, 419, 425, 426, 454, 458, 460, and 464 each coordinate Zn(2+). The 127-residue stretch at 475 to 601 folds into the SET domain; it reads HPLVLFKTSN…AGEELSFDYI (127 aa). S-adenosyl-L-methionine-binding positions include 486–488, Tyr-529, and 558–559; these read SGW and NH. Zn(2+) contacts are provided by Cys-561, Cys-621, Cys-623, and Cys-628. A Post-SET domain is found at 617-633; that stretch reads ARVQCRCGAANCRKVLF.

The protein belongs to the class V-like SAM-binding methyltransferase superfamily. Histone-lysine methyltransferase family. Suvar3-9 subfamily. As to quaternary structure, interacts with Su(var)205 and Su(var)3-7. Probably associates with HDAC1/Rpd3.

The protein localises to the nucleus. It is found in the chromosome. It localises to the centromere. It catalyses the reaction L-lysyl(9)-[histone H3] + 3 S-adenosyl-L-methionine = N(6),N(6),N(6)-trimethyl-L-lysyl(9)-[histone H3] + 3 S-adenosyl-L-homocysteine + 3 H(+). Its function is as follows. Histone methyltransferase that specifically trimethylates 'Lys-9' of histone H3 using monomethylated H3 'Lys-9' as substrate. H3 'Lys-9' trimethylation represents a specific tag for epigenetic transcriptional repression by recruiting Su(var)205/HP1 to methylated histones. Mainly functions in heterochromatin regions, thereby playing a central role in the establishment of constitutive heterochromatin at pericentric regions. Involved in heterochromatic gene silencing including the modification of position-effect-variegation. This Drosophila pseudoobscura pseudoobscura (Fruit fly) protein is Histone-lysine N-methyltransferase Su(var)3-9 (Su(var)3-9).